A 259-amino-acid polypeptide reads, in one-letter code: Thiazole synthase (259 aa).

Lys98 acts as the Schiff-base intermediate with DXP in catalysis. 1-deoxy-D-xylulose 5-phosphate is bound by residues Gly159, 185–186, and 207–208; these read AG and NS.

The protein belongs to the ThiG family. Homotetramer. Forms heterodimers with either ThiH or ThiS.

Its subcellular location is the cytoplasm. The catalysed reaction is [ThiS sulfur-carrier protein]-C-terminal-Gly-aminoethanethioate + 2-iminoacetate + 1-deoxy-D-xylulose 5-phosphate = [ThiS sulfur-carrier protein]-C-terminal Gly-Gly + 2-[(2R,5Z)-2-carboxy-4-methylthiazol-5(2H)-ylidene]ethyl phosphate + 2 H2O + H(+). The protein operates within cofactor biosynthesis; thiamine diphosphate biosynthesis. Catalyzes the rearrangement of 1-deoxy-D-xylulose 5-phosphate (DXP) to produce the thiazole phosphate moiety of thiamine. Sulfur is provided by the thiocarboxylate moiety of the carrier protein ThiS. In vitro, sulfur can be provided by H(2)S. The polypeptide is Thiazole synthase (Chlorobium limicola (strain DSM 245 / NBRC 103803 / 6330)).